The primary structure comprises 148 residues: NADPH-dependent 7-cyano-7-deazaguanine reductase (148 aa).

Cys50 (thioimide intermediate) is an active-site residue. Asp57 acts as the Proton donor in catalysis. Residues 72–74 (VES) and 91–92 (HE) contribute to the substrate site.

It belongs to the GTP cyclohydrolase I family. QueF type 1 subfamily.

The protein localises to the cytoplasm. It carries out the reaction 7-aminomethyl-7-carbaguanine + 2 NADP(+) = 7-cyano-7-deazaguanine + 2 NADPH + 3 H(+). It participates in tRNA modification; tRNA-queuosine biosynthesis. In terms of biological role, catalyzes the NADPH-dependent reduction of 7-cyano-7-deazaguanine (preQ0) to 7-aminomethyl-7-deazaguanine (preQ1). This is NADPH-dependent 7-cyano-7-deazaguanine reductase from Helicobacter pylori (strain J99 / ATCC 700824) (Campylobacter pylori J99).